A 453-amino-acid polypeptide reads, in one-letter code: Protein FAM117A (453 aa).

Over residues 1-25 (MAGAAAGGRGGGAWGPGRGGAGGLR) the composition is skewed to gly residues. The disordered stretch occupies residues 1 to 45 (MAGAAAGGRGGGAWGPGRGGAGGLRRGCSPPAPAGSPRAGLQPLR). Phosphoserine occurs at positions 29 and 67. Residues 149–175 (TDHRKEISKLKQQLQRTKLSRSGKEKE) are a coiled coil. The disordered stretch occupies residues 159-201 (KQQLQRTKLSRSGKEKERGSPLLGDHAVRGALRASPPSFPSGS). 4 positions are modified to phosphoserine: Ser178, Ser193, Ser201, and Ser213. A compositionally biased stretch (low complexity) spans 269–278 (SSPSMSLASP). The interval 269–320 (SSPSMSLASPQPCGLASHEEHRGAAEELASTPNDKASSPGHPAFLEDGSPSP) is disordered. The residue at position 299 (Thr299) is a Phosphothreonine. Phosphoserine is present on residues Ser319 and Ser327. The residue at position 354 (Thr354) is a Phosphothreonine. The segment covering 406-416 (GSPLPPASPRP) has biased composition (pro residues). The disordered stretch occupies residues 406 to 453 (GSPLPPASPRPPPRKDPEASKASPLPFEPWQRTPPSEEPVLFQSSLMV). Phosphoserine is present on residues Ser413 and Ser428.

Belongs to the FAM117 family.

The protein is Protein FAM117A (FAM117A) of Homo sapiens (Human).